The chain runs to 346 residues: tRNA N6-adenosine threonylcarbamoyltransferase (346 aa).

2 residues coordinate Fe cation: His-111 and His-115. Residues 134–138 (LVSGG), Asp-167, Gly-180, Asp-184, and Asn-280 contribute to the substrate site. Asp-308 provides a ligand contact to Fe cation.

It belongs to the KAE1 / TsaD family. Requires Fe(2+) as cofactor.

It is found in the cytoplasm. The catalysed reaction is L-threonylcarbamoyladenylate + adenosine(37) in tRNA = N(6)-L-threonylcarbamoyladenosine(37) in tRNA + AMP + H(+). Functionally, required for the formation of a threonylcarbamoyl group on adenosine at position 37 (t(6)A37) in tRNAs that read codons beginning with adenine. Is involved in the transfer of the threonylcarbamoyl moiety of threonylcarbamoyl-AMP (TC-AMP) to the N6 group of A37, together with TsaE and TsaB. TsaD likely plays a direct catalytic role in this reaction. The chain is tRNA N6-adenosine threonylcarbamoyltransferase from Crocosphaera subtropica (strain ATCC 51142 / BH68) (Cyanothece sp. (strain ATCC 51142)).